Here is a 462-residue protein sequence, read N- to C-terminus: Squalene synthase LSS (462 aa).

NADP(+) contacts are provided by R48 and R73. Residues D76, E79, and D80 each contribute to the Mg(2+) site. NADP(+)-binding residues include R214, K314, and R316. The next 2 helical transmembrane spans lie at 399–419 and 436–456; these read LVLV…PLLW and LGLP…YQVF.

It belongs to the phytoene/squalene synthase family. Mg(2+) is required as a cofactor.

It localises to the membrane. It carries out the reaction 2 (2E,6E)-farnesyl diphosphate + NADH + H(+) = squalene + 2 diphosphate + NAD(+). It catalyses the reaction 2 (2E,6E)-farnesyl diphosphate + NADPH + H(+) = squalene + 2 diphosphate + NADP(+). Its function is as follows. Converts farnesyl diphosphate (FPP) into squalene, a precursor for sterol biosynthesis in eukaryotes. The polypeptide is Squalene synthase LSS (Botryococcus braunii (Green alga)).